Reading from the N-terminus, the 161-residue chain is Cyclic pyranopterin monophosphate synthase (161 aa).

Substrate-binding positions include 75–77 (LCH) and 113–114 (ME). The active site involves Asp-128.

The protein belongs to the MoaC family. As to quaternary structure, homohexamer; trimer of dimers.

It carries out the reaction (8S)-3',8-cyclo-7,8-dihydroguanosine 5'-triphosphate = cyclic pyranopterin phosphate + diphosphate. It functions in the pathway cofactor biosynthesis; molybdopterin biosynthesis. In terms of biological role, catalyzes the conversion of (8S)-3',8-cyclo-7,8-dihydroguanosine 5'-triphosphate to cyclic pyranopterin monophosphate (cPMP). The protein is Cyclic pyranopterin monophosphate synthase of Cronobacter sakazakii (strain ATCC BAA-894) (Enterobacter sakazakii).